Reading from the N-terminus, the 416-residue chain is Serine hydroxymethyltransferase (416 aa).

(6S)-5,6,7,8-tetrahydrofolate contacts are provided by residues leucine 121 and 125–127; that span reads GHL. Lysine 229 bears the N6-(pyridoxal phosphate)lysine mark.

Belongs to the SHMT family. As to quaternary structure, homodimer. Requires pyridoxal 5'-phosphate as cofactor.

The protein resides in the cytoplasm. It catalyses the reaction (6R)-5,10-methylene-5,6,7,8-tetrahydrofolate + glycine + H2O = (6S)-5,6,7,8-tetrahydrofolate + L-serine. It participates in one-carbon metabolism; tetrahydrofolate interconversion. Its pathway is amino-acid biosynthesis; glycine biosynthesis; glycine from L-serine: step 1/1. In terms of biological role, catalyzes the reversible interconversion of serine and glycine with tetrahydrofolate (THF) serving as the one-carbon carrier. This reaction serves as the major source of one-carbon groups required for the biosynthesis of purines, thymidylate, methionine, and other important biomolecules. Also exhibits THF-independent aldolase activity toward beta-hydroxyamino acids, producing glycine and aldehydes, via a retro-aldol mechanism. This chain is Serine hydroxymethyltransferase, found in Neisseria gonorrhoeae (strain NCCP11945).